The sequence spans 141 residues: HTH-type transcriptional regulator MntR (141 aa).

The region spanning 1–63 (MPTPSMEDYI…YEKYRGLVLT (63 aa)) is the HTH dtxR-type domain. Positions 8, 11, 77, 99, 102, and 103 each coordinate Mn(2+).

Belongs to the DtxR/MntR family. As to quaternary structure, homodimer.

It localises to the cytoplasm. Its activity is regulated as follows. DNA binding is strongly activated by Mn(2+). Central regulator of manganese homeostasis. This chain is HTH-type transcriptional regulator MntR, found in Geobacillus kaustophilus (strain HTA426).